Reading from the N-terminus, the 1202-residue chain is DNA-directed RNA polymerase subunit beta (1202 aa).

It belongs to the RNA polymerase beta chain family. As to quaternary structure, the RNAP catalytic core consists of 2 alpha, 1 beta, 1 beta' and 1 omega subunit. When a sigma factor is associated with the core the holoenzyme is formed, which can initiate transcription.

It carries out the reaction RNA(n) + a ribonucleoside 5'-triphosphate = RNA(n+1) + diphosphate. Its function is as follows. DNA-dependent RNA polymerase catalyzes the transcription of DNA into RNA using the four ribonucleoside triphosphates as substrates. The chain is DNA-directed RNA polymerase subunit beta from Mycoplasmopsis synoviae (strain 53) (Mycoplasma synoviae).